We begin with the raw amino-acid sequence, 91 residues long: Potassium channel toxin BuTXK-beta (91 aa).

A signal peptide spans 1–20; sequence MQRNLVVLLLLGMVALSSCG. Residues 21–27 constitute a propeptide that is removed on maturation; it reads LREKHFQ. In terms of domain architecture, BetaSPN-type CS-alpha/beta spans 54–91; that stretch reads QFGCPAYQGYCDDHCQDIKKEEGFCHGMKCKCGIPMGF. 3 disulfide bridges follow: cysteine 57–cysteine 78, cysteine 64–cysteine 83, and cysteine 68–cysteine 85.

It belongs to the long chain scorpion toxin family. Class 1 subfamily. Expressed by the venom gland.

Its subcellular location is the secreted. Functionally, inhibits voltage-gated potassium channel. This chain is Potassium channel toxin BuTXK-beta, found in Buthus israelis (Israeli scorpion).